We begin with the raw amino-acid sequence, 860 residues long: Glucans biosynthesis glucosyltransferase H (860 aa).

6 consecutive transmembrane segments (helical) span residues 146–166, 200–220, 519–539, 576–596, 610–630, and 686–706; these read ILLI…KGIL, ILLL…TALM, VFLT…FLVL, LFST…ILIW, TVSM…RMLF, and FLWW…VSVI.

Belongs to the glycosyltransferase 2 family. OpgH subfamily.

Its subcellular location is the cell inner membrane. Its pathway is glycan metabolism; osmoregulated periplasmic glucan (OPG) biosynthesis. In terms of biological role, involved in the biosynthesis of osmoregulated periplasmic glucans (OPGs). The sequence is that of Glucans biosynthesis glucosyltransferase H from Pseudomonas savastanoi pv. phaseolicola (strain 1448A / Race 6) (Pseudomonas syringae pv. phaseolicola (strain 1448A / Race 6)).